The following is a 261-amino-acid chain: Kallikrein 1-related peptidase b26 (261 aa).

The N-terminal stretch at methionine 1–alanine 18 is a signal peptide. The propeptide at proline 19–arginine 24 is activation peptide. One can recognise a Peptidase S1 domain in the interval valine 25–methionine 258. Intrachain disulfides connect cysteine 31–cysteine 173, cysteine 50–cysteine 66, cysteine 152–cysteine 219, cysteine 184–cysteine 198, and cysteine 209–cysteine 234. Histidine 65 acts as the Charge relay system in catalysis. Residue asparagine 102 is glycosylated (N-linked (GlcNAc...) asparagine). Aspartate 120 (charge relay system) is an active-site residue. Serine 213 serves as the catalytic Charge relay system.

This sequence belongs to the peptidase S1 family. Kallikrein subfamily.

The catalysed reaction is Preferential cleavage of Arg-|-Xaa bonds in small molecule substrates. Highly selective action to release kallidin (lysyl-bradykinin) from kininogen involves hydrolysis of Met-|-Xaa or Leu-|-Xaa.. Its function is as follows. Glandular kallikreins cleave Met-Lys and Arg-Ser bonds in kininogen to release Lys-bradykinin. Functionally, prorenin-converting enzyme cleaves mouse REN-2 prorenin at a dibasic site to yield mature renin. The protein is Kallikrein 1-related peptidase b26 (Klk1b26) of Mus musculus (Mouse).